The sequence spans 379 residues: DNA replication and repair protein RecF (379 aa).

34-41 (GDNGAGKT) lines the ATP pocket.

This sequence belongs to the RecF family.

Its subcellular location is the cytoplasm. In terms of biological role, the RecF protein is involved in DNA metabolism; it is required for DNA replication and normal SOS inducibility. RecF binds preferentially to single-stranded, linear DNA. It also seems to bind ATP. The sequence is that of DNA replication and repair protein RecF from Mesorhizobium japonicum (strain LMG 29417 / CECT 9101 / MAFF 303099) (Mesorhizobium loti (strain MAFF 303099)).